The chain runs to 92 residues: DNA-binding protein HU (92 aa).

A disordered region spans residues 58–92 (AGTARNPRTGETVNRPASKTARFQVGEGLKSSLNS).

Belongs to the bacterial histone-like protein family. Homodimer.

Functionally, histone-like DNA-binding protein which is capable of wrapping DNA to stabilize it, and thus to prevent its denaturation under extreme environmental conditions. The protein is DNA-binding protein HU (hup) of Caulobacter vibrioides (strain ATCC 19089 / CIP 103742 / CB 15) (Caulobacter crescentus).